The chain runs to 353 residues: E3 ubiquitin-protein ligase TRIM63 (353 aa).

The RING-type zinc-finger motif lies at 23 to 79 (CPICLEMFTKPVVILPCQHNLCRKCANDIFQAANPYWTSRGSSVSMSGGRFRCPTCR). The tract at residues 74 to 218 (RCPTCRHEVI…LSQKFDTLYA (145 aa)) is interaction with TTN. The segment at 117–159 (GSHPMCKEHEDEKINIYCLTCEVPTCSMCKVFGIHKACEVAPL) adopts a B box-type zinc-finger fold. Zn(2+)-binding residues include cysteine 122, histidine 125, cysteine 145, and histidine 151. A coiled-coil region spans residues 207–269 (EELSQKFDTL…VETAIQSLDE (63 aa)). The 59-residue stretch at 267–325 (LDEPGGATFLLTAKQLIKSIVEASKGCQLGKTEQGFENMDFFTLDLEHIADALRAIDFG) folds into the COS domain. Positions 326–344 (TDEEEEEFIEEEDQEEEES) are enriched in acidic residues. The interval 326-353 (TDEEEEEFIEEEDQEEEESTEGKEEGHQ) is disordered.

Homodimer. Homooligomer and heterooligomer. Interacts with SUMO2, titin/TTN and GMEB1. Interacts with TRIM54 and probably with TRIM55 and TNNI3. Forms a ternary complex with RACK1 and PRKCE. Interacts with CKM. Muscle specific. Selectively expressed in heart and skeletal muscle. Also expressed in the iris.

Its subcellular location is the cytoplasm. It is found in the nucleus. The protein resides in the myofibril. The protein localises to the sarcomere. It localises to the m line. Its subcellular location is the z line. The enzyme catalyses S-ubiquitinyl-[E2 ubiquitin-conjugating enzyme]-L-cysteine + [acceptor protein]-L-lysine = [E2 ubiquitin-conjugating enzyme]-L-cysteine + N(6)-ubiquitinyl-[acceptor protein]-L-lysine.. It participates in protein modification; protein ubiquitination. Functionally, E3 ubiquitin ligase. Mediates the ubiquitination and subsequent proteasomal degradation of CKM, GMEB1 and HIBADH. Regulates the proteasomal degradation of muscle proteins under amino acid starvation, where muscle protein is catabolized to provide other organs with amino acids. Inhibits de novo skeletal muscle protein synthesis under amino acid starvation. Regulates proteasomal degradation of cardiac troponin I/TNNI3 and probably of other sarcomeric-associated proteins. May play a role in striated muscle atrophy and hypertrophy by regulating an anti-hypertrophic PKC-mediated signaling pathway. May regulate the organization of myofibrils through TTN in muscle cells. This chain is E3 ubiquitin-protein ligase TRIM63 (TRIM63), found in Homo sapiens (Human).